The following is a 203-amino-acid chain: Interferon type B (203 aa).

Residues 1 to 27 (MTANHQSPGMHSILLLLLLPALTTTFS) form the signal peptide. 2 disulfide bridges follow: C28–C125 and C57–C164. N-linked (GlcNAc...) asparagine glycosylation is found at N37 and N160.

Belongs to the alpha/beta interferon family.

It localises to the secreted. Functionally, has antiviral activities. The protein is Interferon type B (IFNB) of Gallus gallus (Chicken).